We begin with the raw amino-acid sequence, 463 residues long: Siroheme synthase (463 aa).

Positions 1-203 are precorrin-2 dehydrogenase /sirohydrochlorin ferrochelatase; sequence MDYLPLFHKL…GQGAEAERLL (203 aa). NAD(+) contacts are provided by residues 22-23 and 43-44; these read EI and PE. Position 128 is a phosphoserine (Ser128). The uroporphyrinogen-III C-methyltransferase stretch occupies residues 216–463; that stretch reads GEVYLVGAGP…LAWFEGAQNS (248 aa). S-adenosyl-L-methionine is bound at residue Pro225. Residue Asp248 is the Proton acceptor of the active site. The active-site Proton donor is the Lys270. Residues 301 to 303, Ile306, 331 to 332, Met383, and Gly412 contribute to the S-adenosyl-L-methionine site; these read GGD and TA.

In the N-terminal section; belongs to the precorrin-2 dehydrogenase / sirohydrochlorin ferrochelatase family. It in the C-terminal section; belongs to the precorrin methyltransferase family.

The catalysed reaction is uroporphyrinogen III + 2 S-adenosyl-L-methionine = precorrin-2 + 2 S-adenosyl-L-homocysteine + H(+). The enzyme catalyses precorrin-2 + NAD(+) = sirohydrochlorin + NADH + 2 H(+). It catalyses the reaction siroheme + 2 H(+) = sirohydrochlorin + Fe(2+). It participates in cofactor biosynthesis; adenosylcobalamin biosynthesis; precorrin-2 from uroporphyrinogen III: step 1/1. Its pathway is cofactor biosynthesis; adenosylcobalamin biosynthesis; sirohydrochlorin from precorrin-2: step 1/1. The protein operates within porphyrin-containing compound metabolism; siroheme biosynthesis; precorrin-2 from uroporphyrinogen III: step 1/1. It functions in the pathway porphyrin-containing compound metabolism; siroheme biosynthesis; siroheme from sirohydrochlorin: step 1/1. It participates in porphyrin-containing compound metabolism; siroheme biosynthesis; sirohydrochlorin from precorrin-2: step 1/1. Multifunctional enzyme that catalyzes the SAM-dependent methylations of uroporphyrinogen III at position C-2 and C-7 to form precorrin-2 via precorrin-1. Then it catalyzes the NAD-dependent ring dehydrogenation of precorrin-2 to yield sirohydrochlorin. Finally, it catalyzes the ferrochelation of sirohydrochlorin to yield siroheme. This Pseudomonas entomophila (strain L48) protein is Siroheme synthase.